The sequence spans 224 residues: Glycerol-3-phosphate acyltransferase (224 aa).

6 helical membrane passes run 14 to 34, 70 to 90, 99 to 119, 129 to 149, 162 to 182, and 185 to 205; these read INMI…GWLL, YLSI…VLGA, TQWS…YLGF, IGSV…IWGI, LIGV…LPLP, and ISII…LFIF.

The protein belongs to the PlsY family. Probably interacts with PlsX.

The protein resides in the cell inner membrane. The catalysed reaction is an acyl phosphate + sn-glycerol 3-phosphate = a 1-acyl-sn-glycero-3-phosphate + phosphate. It functions in the pathway lipid metabolism; phospholipid metabolism. Its function is as follows. Catalyzes the transfer of an acyl group from acyl-phosphate (acyl-PO(4)) to glycerol-3-phosphate (G3P) to form lysophosphatidic acid (LPA). This enzyme utilizes acyl-phosphate as fatty acyl donor, but not acyl-CoA or acyl-ACP. The protein is Glycerol-3-phosphate acyltransferase of Helicobacter hepaticus (strain ATCC 51449 / 3B1).